Reading from the N-terminus, the 139-residue chain is Putative pre-16S rRNA nuclease (139 aa).

This sequence belongs to the YqgF nuclease family.

The protein localises to the cytoplasm. In terms of biological role, could be a nuclease involved in processing of the 5'-end of pre-16S rRNA. In Legionella pneumophila subsp. pneumophila (strain Philadelphia 1 / ATCC 33152 / DSM 7513), this protein is Putative pre-16S rRNA nuclease.